The following is a 415-amino-acid chain: Protein fuzzy homolog (415 aa).

This sequence belongs to the fuzzy family. Component of the CPLANE (ciliogenesis and planar polarity effectors) complex, composed of INTU, FUZ and WDPCP. Interacts with CPLANE1 and CPLANE2.

It localises to the cytoplasm. The protein localises to the cytoskeleton. Its subcellular location is the cilium basal body. Its function is as follows. Probable planar cell polarity effector involved in cilium biogenesis. Proposed to function as core component of the CPLANE (ciliogenesis and planar polarity effectors) complex involved in the recruitment of peripheral IFT-A proteins to basal bodies. May regulate protein and membrane transport to the cilium. May regulate the morphogenesis of hair follicles which depends on functional primary cilia. Binds phosphatidylinositol 3-phosphate with highest affinity, followed by phosphatidylinositol 4-phosphate and phosphatidylinositol 5-phosphate. This is Protein fuzzy homolog (Fuz) from Rattus norvegicus (Rat).